The following is a 164-amino-acid chain: MQFSISALVLGLAATVYALPPGAPSAGGAGSGNGVGNKGNTDVRFSVPDNMTVKQAQAKCGDQAQLSCCNKAVYAGDTTDINSGILGGTLSNLIGSGSGASGLGLFDQCSKLDLQIPVLIGIPIQDLINQKCKQNIACCQNSPSSANSDLIGLGLPCVALGSIL.

A signal peptide spans 1-18; the sequence is MQFSISALVLGLAATVYA. Residue Asn50 is glycosylated (N-linked (GlcNAc...) asparagine). Intrachain disulfides connect Cys60–Cys138, Cys68–Cys132, Cys69–Cys109, and Cys139–Cys157.

Belongs to the fungal hydrophobin family. As to quaternary structure, self-assembles to form functional amyloid fibrils called rodlets. Self-assembly into fibrillar rodlets occurs spontaneously at hydrophobic:hydrophilic interfaces and the rodlets further associate laterally to form amphipathic monolayers.

It localises to the secreted. It is found in the cell wall. Functionally, aerial growth, conidiation, and dispersal of filamentous fungi in the environment rely upon a capability of their secreting small amphipathic proteins called hydrophobins (HPBs) with low sequence identity. Class I can self-assemble into an outermost layer of rodlet bundles on aerial cell surfaces, conferring cellular hydrophobicity that supports fungal growth, development and dispersal; whereas Class II form highly ordered films at water-air interfaces through intermolecular interactions but contribute nothing to the rodlet structure. RodA is a class I hydrophobin involved in the cell surface hydrophobicity. The surface rodlet layer of the conidial cell wall makes airborne conidia of filamentous fungi inert to both innate and adaptive immunity. This Penicillium camemberti (strain FM 013) protein is Class I hydrophobin rodA.